Reading from the N-terminus, the 383-residue chain is Succinyl-diaminopimelate desuccinylase (383 aa).

His72 contacts Zn(2+). Asp74 is a catalytic residue. Asp105 serves as a coordination point for Zn(2+). The Proton acceptor role is filled by Glu139. Residues Glu140, Glu168, and His356 each coordinate Zn(2+).

It belongs to the peptidase M20A family. DapE subfamily. In terms of assembly, homodimer. Zn(2+) serves as cofactor. The cofactor is Co(2+).

It catalyses the reaction N-succinyl-(2S,6S)-2,6-diaminopimelate + H2O = (2S,6S)-2,6-diaminopimelate + succinate. It participates in amino-acid biosynthesis; L-lysine biosynthesis via DAP pathway; LL-2,6-diaminopimelate from (S)-tetrahydrodipicolinate (succinylase route): step 3/3. Catalyzes the hydrolysis of N-succinyl-L,L-diaminopimelic acid (SDAP), forming succinate and LL-2,6-diaminopimelate (DAP), an intermediate involved in the bacterial biosynthesis of lysine and meso-diaminopimelic acid, an essential component of bacterial cell walls. The protein is Succinyl-diaminopimelate desuccinylase of Beijerinckia indica subsp. indica (strain ATCC 9039 / DSM 1715 / NCIMB 8712).